Consider the following 153-residue polypeptide: 3-hydroxyacyl-[acyl-carrier-protein] dehydratase FabZ (153 aa).

His-54 is an active-site residue.

Belongs to the thioester dehydratase family. FabZ subfamily.

The protein localises to the cytoplasm. It catalyses the reaction a (3R)-hydroxyacyl-[ACP] = a (2E)-enoyl-[ACP] + H2O. Its function is as follows. Involved in unsaturated fatty acids biosynthesis. Catalyzes the dehydration of short chain beta-hydroxyacyl-ACPs and long chain saturated and unsaturated beta-hydroxyacyl-ACPs. This Shewanella denitrificans (strain OS217 / ATCC BAA-1090 / DSM 15013) protein is 3-hydroxyacyl-[acyl-carrier-protein] dehydratase FabZ.